The primary structure comprises 190 residues: Protein GrpE (190 aa).

The interval 1 to 33 is disordered; the sequence is MSEQEKDQNNAEPQVETVEEQQAAAAAEAVEPT. Over residues 11–32 the composition is skewed to low complexity; it reads AEPQVETVEEQQAAAAAEAVEP.

It belongs to the GrpE family. As to quaternary structure, homodimer.

Its subcellular location is the cytoplasm. In terms of biological role, participates actively in the response to hyperosmotic and heat shock by preventing the aggregation of stress-denatured proteins, in association with DnaK and GrpE. It is the nucleotide exchange factor for DnaK and may function as a thermosensor. Unfolded proteins bind initially to DnaJ; upon interaction with the DnaJ-bound protein, DnaK hydrolyzes its bound ATP, resulting in the formation of a stable complex. GrpE releases ADP from DnaK; ATP binding to DnaK triggers the release of the substrate protein, thus completing the reaction cycle. Several rounds of ATP-dependent interactions between DnaJ, DnaK and GrpE are required for fully efficient folding. This Alcanivorax borkumensis (strain ATCC 700651 / DSM 11573 / NCIMB 13689 / SK2) protein is Protein GrpE.